Reading from the N-terminus, the 251-residue chain is Flap endonuclease Xni (251 aa).

Position 104 (aspartate 104) interacts with Mg(2+). Positions 160-249 constitute a 5'-3' exonuclease domain; that stretch reads VSPGQLADFW…LDGNLQQLRL (90 aa). 5 residues coordinate K(+): leucine 171, alanine 172, proline 180, valine 182, and isoleucine 185. Positions 184-189 are interaction with DNA; that stretch reads GIGPKS.

The protein belongs to the Xni family. Mg(2+) is required as a cofactor. Requires K(+) as cofactor.

Its function is as follows. Has flap endonuclease activity. During DNA replication, flap endonucleases cleave the 5'-overhanging flap structure that is generated by displacement synthesis when DNA polymerase encounters the 5'-end of a downstream Okazaki fragment. The chain is Flap endonuclease Xni from Cronobacter sakazakii (strain ATCC BAA-894) (Enterobacter sakazakii).